The following is a 151-amino-acid chain: Ubiquitin-conjugating enzyme E2 2 (151 aa).

The disordered stretch occupies residues 1–26 (MSTSARRRLMRDFKRMQTDPPAGVSA). The 147-residue stretch at 4-150 (SARRRLMRDF…VRETVEKSWE (147 aa)) folds into the UBC core domain. Catalysis depends on Cys88, which acts as the Glycyl thioester intermediate.

The protein belongs to the ubiquitin-conjugating enzyme family.

Its subcellular location is the cytoplasm. It localises to the nucleus. It catalyses the reaction S-ubiquitinyl-[E1 ubiquitin-activating enzyme]-L-cysteine + [E2 ubiquitin-conjugating enzyme]-L-cysteine = [E1 ubiquitin-activating enzyme]-L-cysteine + S-ubiquitinyl-[E2 ubiquitin-conjugating enzyme]-L-cysteine.. It participates in protein modification; protein ubiquitination. In terms of biological role, catalyzes the covalent attachment of ubiquitin to other proteins. Plays a role in transcription regulation by catalyzing the monoubiquitination of histone H2B to form H2BK123ub1. H2BK123ub1 gives a specific tag for epigenetic transcriptional activation and is also a prerequisite for H3K4me and H3K79me formation. Also involved in postreplication repair of UV-damaged DNA, in N-end rule-dependent protein degradation and in sporulation. The protein is Ubiquitin-conjugating enzyme E2 2 (uvsJ) of Emericella nidulans (strain FGSC A4 / ATCC 38163 / CBS 112.46 / NRRL 194 / M139) (Aspergillus nidulans).